The following is a 709-amino-acid chain: MTEDLDAWRKLAEKELKGKSPDSLTWNTLEGIPVKPLYTRADLAGMEHLDGLPGVAPFTRGVRATMYAGRPWTIRQYAGFSTAEASNAFYRKALAAGQQGVSVAFDLATHRGYDSDHPRVVGDVGKAGVAIDSIEDMKILFNGIPLEKISVSMTMNGAVIPILANFIVTGEEQGVPRAALSGTIQNDILKEFMVRNTYIYPPEPSMRIIADIIEYTSKEMPKFNSISISGYHMQEAGANLVQELAYTLADGREYVRAALARGMNVDDFAGRLSFFFAIGMNFFMEAAKLRAARLLWHRIMSEFAPKKPGSLMLRTHCQTSGVSLQEQDPYNNVIRTAYEAMSAALGGTQSLHTNALDEAIALPTEFSARIARNTQIILQEETGVTRVVDPLAGSYYVESLTAELAEKAWALIEEVEAMGGMTKAVASGMPKLRIEESAARRQAAIDRGEDVIVGVNKYRLAKEDPIEILDIDNVAVRDAQIARLEKMRATRDEAACQAALDELTRRAAEGGNLLEAAVDASRARASVGEISMAMEKVFGRHRAEVKTLSGVYGAAYEGDDGFAQIQRDVESFAEEEGRRPRMLVVKMGQDGHDRGAKVIATAFADIGFDVDVGTLFQTPEEAAQDAIDNDVHVVGISSLAAGHKTLAPKLIEALKEKGAGEILVICGGVIPQQDYDFLQQAGVKAIFGPGTNIPSAAKHILDLIREARS.

Substrate is bound by residues 73–77 (TIRQY), 183–185 (TIQ), Arg195, Lys222, His232, and 271–273 (RLS). The region spanning 579 to 709 (RPRMLVVKMG…ILDLIREARS (131 aa)) is the B12-binding domain. His592 provides a ligand contact to adenosylcob(III)alamin.

This sequence belongs to the methylmalonyl-CoA mutase family. Homodimer. It depends on adenosylcob(III)alamin as a cofactor.

The enzyme catalyses (R)-methylmalonyl-CoA = succinyl-CoA. Its pathway is metabolic intermediate metabolism; propanoyl-CoA degradation; succinyl-CoA from propanoyl-CoA: step 3/3. Radical enzyme that catalyzes the transformation of (2R)-methylmalonyl-CoA to succinyl-CoA. Is involved in the ethylmalonyl-CoA pathway for acetyl-CoA assimilation required for R.sphaeroides growth on acetate as sole carbon source. The protein is Methylmalonyl-CoA mutase of Cereibacter sphaeroides (strain ATCC 17023 / DSM 158 / JCM 6121 / CCUG 31486 / LMG 2827 / NBRC 12203 / NCIMB 8253 / ATH 2.4.1.) (Rhodobacter sphaeroides).